The chain runs to 553 residues: Glutamate--tRNA ligase (553 aa).

Residues 103 to 113 (PNPSGPLHIGH) carry the 'HIGH' region motif.

This sequence belongs to the class-I aminoacyl-tRNA synthetase family. Glutamate--tRNA ligase type 2 subfamily.

It is found in the cytoplasm. The catalysed reaction is tRNA(Glu) + L-glutamate + ATP = L-glutamyl-tRNA(Glu) + AMP + diphosphate. In terms of biological role, catalyzes the attachment of glutamate to tRNA(Glu) in a two-step reaction: glutamate is first activated by ATP to form Glu-AMP and then transferred to the acceptor end of tRNA(Glu). The sequence is that of Glutamate--tRNA ligase from Methanothermobacter thermautotrophicus (strain ATCC 29096 / DSM 1053 / JCM 10044 / NBRC 100330 / Delta H) (Methanobacterium thermoautotrophicum).